A 120-amino-acid polypeptide reads, in one-letter code: Large ribosomal subunit protein bL19 (120 aa).

This sequence belongs to the bacterial ribosomal protein bL19 family.

Its function is as follows. This protein is located at the 30S-50S ribosomal subunit interface and may play a role in the structure and function of the aminoacyl-tRNA binding site. The chain is Large ribosomal subunit protein bL19 from Synechococcus sp. (strain ATCC 27144 / PCC 6301 / SAUG 1402/1) (Anacystis nidulans).